We begin with the raw amino-acid sequence, 173 residues long: C-phycocyanin beta subunit (173 aa).

N4-methylasparagine is present on N73. 2 residues coordinate (2R,3E)-phycocyanobilin: C83 and C154.

The protein belongs to the phycobiliprotein family. Heterodimer of an alpha and a beta subunit, which further assembles into trimers and the trimers into hexamers. Post-translationally, contains two covalently linked bilin chromophores.

Its subcellular location is the cellular thylakoid membrane. Light-harvesting photosynthetic bile pigment-protein from the phycobiliprotein complex (phycobilisome, PBS). Phycocyanin is the major phycobiliprotein in the PBS rod. The chain is C-phycocyanin beta subunit (cpcB1) from Synechococcus elongatus (strain ATCC 33912 / PCC 7942 / FACHB-805) (Anacystis nidulans R2).